The sequence spans 485 residues: Membrane-bound lytic murein transglycosylase F (485 aa).

The signal sequence occupies residues 1–29 (MFAHTALRQRCAKWLFATGLFLLLGACVE). Residues 30-267 (KPSTLERVKE…RLKDRYYGHV (238 aa)) form a non-LT domain region. The LT domain stretch occupies residues 268–485 (DVLGYVGAYT…DKPADQSPPM (218 aa)). Glu314 is a catalytic residue. A disordered region spans residues 465–485 (EGNLHVPGVNKDKPADQSPPM).

The protein in the N-terminal section; belongs to the bacterial solute-binding protein 3 family. It in the C-terminal section; belongs to the transglycosylase Slt family.

It localises to the cell outer membrane. The catalysed reaction is Exolytic cleavage of the (1-&gt;4)-beta-glycosidic linkage between N-acetylmuramic acid (MurNAc) and N-acetylglucosamine (GlcNAc) residues in peptidoglycan, from either the reducing or the non-reducing ends of the peptidoglycan chains, with concomitant formation of a 1,6-anhydrobond in the MurNAc residue.. In terms of biological role, murein-degrading enzyme that degrades murein glycan strands and insoluble, high-molecular weight murein sacculi, with the concomitant formation of a 1,6-anhydromuramoyl product. Lytic transglycosylases (LTs) play an integral role in the metabolism of the peptidoglycan (PG) sacculus. Their lytic action creates space within the PG sacculus to allow for its expansion as well as for the insertion of various structures such as secretion systems and flagella. This is Membrane-bound lytic murein transglycosylase F from Pseudomonas putida (strain GB-1).